The following is a 353-amino-acid chain: Photosystem II protein D1 (353 aa).

Thr-2 bears the N-acetylthreonine mark. A Phosphothreonine modification is found at Thr-2. Transmembrane regions (helical) follow at residues 29–46, 118–133, and 142–156; these read YIGWFGVLMIPTLLTATS, HFLLGVACYMGREWEL, and WIAVAYSAPVAAATA. Residue His-118 participates in chlorophyll a binding. Residue Tyr-126 participates in pheophytin a binding. Residues Asp-170 and Glu-189 each contribute to the [CaMn4O5] cluster site. A helical transmembrane segment spans residues 197–218; that stretch reads FHMLGVAGVFGGSLFSAMHGSL. A chlorophyll a-binding site is contributed by His-198. Residues His-215 and 264 to 265 each bind a quinone; that span reads SF. His-215 lines the Fe cation pocket. His-272 is a binding site for Fe cation. Residues 274-288 form a helical membrane-spanning segment; it reads FLAAWPVVGIWFTAL. His-332, Glu-333, Asp-342, and Ala-344 together coordinate [CaMn4O5] cluster. Positions 345–353 are excised as a propeptide; the sequence is AVEAPSTNG.

This sequence belongs to the reaction center PufL/M/PsbA/D family. As to quaternary structure, PSII is composed of 1 copy each of membrane proteins PsbA, PsbB, PsbC, PsbD, PsbE, PsbF, PsbH, PsbI, PsbJ, PsbK, PsbL, PsbM, PsbT, PsbX, PsbY, PsbZ, Psb30/Ycf12, at least 3 peripheral proteins of the oxygen-evolving complex and a large number of cofactors. It forms dimeric complexes. Requires The D1/D2 heterodimer binds P680, chlorophylls that are the primary electron donor of PSII, and subsequent electron acceptors. It shares a non-heme iron and each subunit binds pheophytin, quinone, additional chlorophylls, carotenoids and lipids. D1 provides most of the ligands for the Mn4-Ca-O5 cluster of the oxygen-evolving complex (OEC). There is also a Cl(-1) ion associated with D1 and D2, which is required for oxygen evolution. The PSII complex binds additional chlorophylls, carotenoids and specific lipids. as cofactor. In terms of processing, tyr-161 forms a radical intermediate that is referred to as redox-active TyrZ, YZ or Y-Z. Post-translationally, C-terminally processed by CTPA; processing is essential to allow assembly of the oxygen-evolving complex and thus photosynthetic growth.

The protein resides in the plastid. It localises to the chloroplast thylakoid membrane. The enzyme catalyses 2 a plastoquinone + 4 hnu + 2 H2O = 2 a plastoquinol + O2. Its function is as follows. Photosystem II (PSII) is a light-driven water:plastoquinone oxidoreductase that uses light energy to abstract electrons from H(2)O, generating O(2) and a proton gradient subsequently used for ATP formation. It consists of a core antenna complex that captures photons, and an electron transfer chain that converts photonic excitation into a charge separation. The D1/D2 (PsbA/PsbD) reaction center heterodimer binds P680, the primary electron donor of PSII as well as several subsequent electron acceptors. The sequence is that of Photosystem II protein D1 from Ceratophyllum demersum (Rigid hornwort).